The chain runs to 43 residues: uncharacterized protein (43 aa).

It belongs to the ELIP/psbS family.

It is found in the plastid. The protein localises to the chloroplast. Possible role in chlorophyll and/or carotenoid binding. This is an uncharacterized protein from Cyanidium caldarium (Red alga).